The chain runs to 402 residues: Phosphoglycerate kinase (402 aa).

Substrate is bound by residues 24–26 (DFN), Arg41, 64–67 (HMGR), Arg123, and Arg156. Residues Lys207, Gly298, Glu329, and 358 to 361 (GGDS) each bind ATP.

This sequence belongs to the phosphoglycerate kinase family. In terms of assembly, monomer.

It is found in the cytoplasm. It catalyses the reaction (2R)-3-phosphoglycerate + ATP = (2R)-3-phospho-glyceroyl phosphate + ADP. It functions in the pathway carbohydrate degradation; glycolysis; pyruvate from D-glyceraldehyde 3-phosphate: step 2/5. The sequence is that of Phosphoglycerate kinase from Microcystis aeruginosa (strain NIES-843 / IAM M-2473).